Reading from the N-terminus, the 362-residue chain is Biotin synthase (362 aa).

Positions 70 to 305 (CCGNVVDLCS…QQIIRYAGGR (236 aa)) constitute a Radical SAM core domain. C88, C92, and C95 together coordinate [4Fe-4S] cluster. Residues C133, C170, C230, and R300 each contribute to the [2Fe-2S] cluster site.

Belongs to the radical SAM superfamily. Biotin synthase family. In terms of assembly, homodimer. [4Fe-4S] cluster serves as cofactor. Requires [2Fe-2S] cluster as cofactor.

It catalyses the reaction (4R,5S)-dethiobiotin + (sulfur carrier)-SH + 2 reduced [2Fe-2S]-[ferredoxin] + 2 S-adenosyl-L-methionine = (sulfur carrier)-H + biotin + 2 5'-deoxyadenosine + 2 L-methionine + 2 oxidized [2Fe-2S]-[ferredoxin]. The protein operates within cofactor biosynthesis; biotin biosynthesis; biotin from 7,8-diaminononanoate: step 2/2. Catalyzes the conversion of dethiobiotin (DTB) to biotin by the insertion of a sulfur atom into dethiobiotin via a radical-based mechanism. In Synechocystis sp. (strain ATCC 27184 / PCC 6803 / Kazusa), this protein is Biotin synthase.